The following is a 384-amino-acid chain: 8-amino-7-oxononanoate synthase (384 aa).

R21 serves as a coordination point for substrate. Pyridoxal 5'-phosphate is bound at residue 108 to 109 (GF). H133 provides a ligand contact to substrate. Residues S179, H207, and T233 each coordinate pyridoxal 5'-phosphate. Position 236 is an N6-(pyridoxal phosphate)lysine (K236). T352 contributes to the substrate binding site.

It belongs to the class-II pyridoxal-phosphate-dependent aminotransferase family. BioF subfamily. In terms of assembly, homodimer. Pyridoxal 5'-phosphate is required as a cofactor.

The enzyme catalyses 6-carboxyhexanoyl-[ACP] + L-alanine + H(+) = (8S)-8-amino-7-oxononanoate + holo-[ACP] + CO2. It functions in the pathway cofactor biosynthesis; biotin biosynthesis. Catalyzes the decarboxylative condensation of pimeloyl-[acyl-carrier protein] and L-alanine to produce 8-amino-7-oxononanoate (AON), [acyl-carrier protein], and carbon dioxide. In Escherichia coli O8 (strain IAI1), this protein is 8-amino-7-oxononanoate synthase.